Here is a 77-residue protein sequence, read N- to C-terminus: Fungal protease inhibitor F (77 aa).

Residues 1–22 (MASKNLFVLFFIFALFAANIAA) form the signal peptide. 4 cysteine pairs are disulfide-bonded: Cys25–Cys57, Cys36–Cys49, Cys40–Cys77, and Cys59–Cys71.

This sequence belongs to the protease inhibitor I40 family. In terms of tissue distribution, hemolymph.

It is found in the secreted. Its function is as follows. Highly specific for fungal protease and subtilisin. The protein is Fungal protease inhibitor F of Bombyx mori (Silk moth).